The sequence spans 703 residues: MSQEKKVFKTEWAGRPLIIETGQLAKQANGAVLVRYGDTVVLSTATASKEPRDVDFFPLMVNYEEKLYAAGKIPGGFNKREGRPGEDATLTSRLIDRPIRPLFPKGYRHDVQVISIVMSVDPDNSPEMAAMIGSSMALAVSDIPFEGPIAGVNVGLVDGELIINPDVQQREVSVLDLQVAGHFDAVNMVEAGAKEVAEDKMLEAIMFGHAEIKKLVEFQQSIIDEIQPVKSEFVPVEVDADLESKVEQLSESFGLSQAIQTQEKLAREENITAIKLKVIEAFEGEDEAVITAVNKKFDALIKEEVRRLITEEKVRPDGRRPDEIRPLDSEVGILPRVHGSGLFTRGQTQALSVATLGALGEHQIIDGLGVEEEKRYMHHYNFPNFSVGETGPIRAPGRREIGHGALGERALLQVIPDEKEFPYTIRVVSEVLESNGSSSQASICGSTLALMDAGVPIKAPVAGIAMGLVTKDENYTILSDIQGMEDALGDMDFKVAGTKEGITAIQMDIKINGLTEDILREALEQARVGRLHIMEHMLSTISEPRAELSQYAPKIEIIHINPDKIRDVIGPGGKKINEIIDATGVKLDIEQDGTVFIGSSDASMIEAAKKLIENIVREAEVGQIYMATVKRIEKFGAFVEIFPGKDALVHISQIALERINKVEDVVKLGDQFLVKVTEIDKQGRVNASRKVLLEEEKKASEEK.

Mg(2+)-binding residues include Asp-486 and Asp-492. One can recognise a KH domain in the interval 553-612; it reads PKIEIIHINPDKIRDVIGPGGKKINEIIDATGVKLDIEQDGTVFIGSSDASMIEAAKKLI. The 69-residue stretch at 622-690 folds into the S1 motif domain; it reads GQIYMATVKR…KQGRVNASRK (69 aa).

It belongs to the polyribonucleotide nucleotidyltransferase family. Mg(2+) serves as cofactor.

Its subcellular location is the cytoplasm. The enzyme catalyses RNA(n+1) + phosphate = RNA(n) + a ribonucleoside 5'-diphosphate. Functionally, involved in mRNA degradation. Catalyzes the phosphorolysis of single-stranded polyribonucleotides processively in the 3'- to 5'-direction. The chain is Polyribonucleotide nucleotidyltransferase from Macrococcus caseolyticus (strain JCSC5402) (Macrococcoides caseolyticum).